Consider the following 914-residue polypeptide: UPF0182 protein PTH_1387 (914 aa).

7 helical membrane passes run 7-27, 48-68, 109-129, 173-193, 209-229, 252-272, and 281-301; these read FAAY…IAGA, IIIS…VLLF, LLLL…NFTV, INWV…VVYF, YHFS…YQLE, TLLA…AILI, and LVIY…GIYP.

Belongs to the UPF0182 family.

The protein localises to the cell membrane. In Pelotomaculum thermopropionicum (strain DSM 13744 / JCM 10971 / SI), this protein is UPF0182 protein PTH_1387.